The following is a 153-amino-acid chain: ATP synthase subunit b' (153 aa).

A helical transmembrane segment spans residues 20 to 40 (TLPLMAVQVVLLTFILNALFF).

It belongs to the ATPase B chain family. F-type ATPases have 2 components, F(1) - the catalytic core - and F(0) - the membrane proton channel. F(1) has five subunits: alpha(3), beta(3), gamma(1), delta(1), epsilon(1). F(0) has four main subunits: a(1), b(1), b'(1) and c(10-14). The alpha and beta chains form an alternating ring which encloses part of the gamma chain. F(1) is attached to F(0) by a central stalk formed by the gamma and epsilon chains, while a peripheral stalk is formed by the delta, b and b' chains.

The protein localises to the cellular thylakoid membrane. Its function is as follows. F(1)F(0) ATP synthase produces ATP from ADP in the presence of a proton or sodium gradient. F-type ATPases consist of two structural domains, F(1) containing the extramembraneous catalytic core and F(0) containing the membrane proton channel, linked together by a central stalk and a peripheral stalk. During catalysis, ATP synthesis in the catalytic domain of F(1) is coupled via a rotary mechanism of the central stalk subunits to proton translocation. In terms of biological role, component of the F(0) channel, it forms part of the peripheral stalk, linking F(1) to F(0). The b'-subunit is a diverged and duplicated form of b found in plants and photosynthetic bacteria. The polypeptide is ATP synthase subunit b' (Prochlorococcus marinus (strain NATL1A)).